The sequence spans 478 residues: Cytochrome c-552 (478 aa).

The N-terminal stretch at 1-26 is a signal peptide; it reads MTRIKINARRIFSLLIPFFFFTSVHA. Residue His-94 participates in heme c binding. Heme is bound by residues Cys-122, Cys-125, and Lys-126. The heme c site is built by Cys-160, Cys-163, His-164, Cys-209, Cys-212, and His-213. Residues Glu-215, Tyr-216, Lys-261, and Gln-263 each contribute to the Ca(2+) site. Tyr-216 provides a ligand contact to substrate. Residue His-264 participates in substrate binding. 9 residues coordinate heme c: His-275, Cys-282, Cys-285, His-286, His-301, Cys-314, Cys-317, His-318, and His-393.

The protein belongs to the cytochrome c-552 family. The cofactor is Ca(2+). Heme c serves as cofactor.

It is found in the periplasm. The catalysed reaction is 6 Fe(III)-[cytochrome c] + NH4(+) + 2 H2O = 6 Fe(II)-[cytochrome c] + nitrite + 8 H(+). It participates in nitrogen metabolism; nitrate reduction (assimilation). Its function is as follows. Catalyzes the reduction of nitrite to ammonia, consuming six electrons in the process. This chain is Cytochrome c-552, found in Shigella flexneri.